Here is an 81-residue protein sequence, read N- to C-terminus: CLAVATA3/ESR (CLE)-related protein 25 (81 aa).

Residues Met1–Ser30 form the signal peptide. The interval Lys57–Val81 is disordered. Hydroxyproline is present on residues Pro61 and Pro64. Pro64 carries an O-linked (Ara...) hydroxyproline glycan. Residues Ile67–Val81 show a composition bias toward basic and acidic residues.

This sequence belongs to the CLV3/ESR signal peptide family. Post-translationally, the O-glycosylation (arabinosylation) of the hydroxyproline Pro-64 enhances binding affinity of the CLE25p peptide for its receptor. In terms of tissue distribution, mostly expressed in flowers and siliques, and, to a lower extent, in roots, stems, apex, seedlings, leaves and pollen.

The protein localises to the secreted. It localises to the extracellular space. In terms of biological role, extracellular signal peptide that regulates cell fate. Represses root apical meristem maintenance. Regulates the transition of protophloem cells from proliferation to differentiation, thus impinging on postembryonic growth capacity of the root meristem; this signaling pathway requires CRN and CLV2. The chain is CLAVATA3/ESR (CLE)-related protein 25 from Arabidopsis thaliana (Mouse-ear cress).